Here is a 133-residue protein sequence, read N- to C-terminus: Interleukin-5 (133 aa).

Residues 1–20 form the signal peptide; it reads MRRMLLHLSVLTLSCVWATA. Asparagine 46, asparagine 75, and asparagine 89 each carry an N-linked (GlcNAc...) asparagine glycan.

Belongs to the IL-5 family. Homodimer; disulfide-linked. Interacts with IL5RA. Interacts with CSF2RB. In terms of tissue distribution, expressed in lymphoid cells, including spleen, thymus, lymph nodes and peripheral blood mononuclear cells.

Its subcellular location is the secreted. In terms of biological role, homodimeric cytokine expressed predominantly by T-lymphocytes and NK cells that plays an important role in the survival, differentiation, and chemotaxis of eosinophils. Also acts on activated and resting B-cells to induce immunoglobulin production, growth, and differentiation. Mechanistically, exerts its biological effects through a receptor composed of IL5RA subunit and the cytokine receptor common subunit beta/CSF2RB. Binding to the receptor leads to activation of various kinases including LYN, SYK and JAK2 and thereby propagates signals through the RAS-MAPK and JAK-STAT5 pathways respectively. The chain is Interleukin-5 (Il5) from Mus musculus (Mouse).